We begin with the raw amino-acid sequence, 457 residues long: Flavohemoprotein-1 (457 aa).

The 156-residue stretch at 2-157 (ALSEDTIKAV…LADLLIKREE (156 aa)) folds into the Globin domain. Position 106 (His106) interacts with heme b. Catalysis depends on charge relay system residues Tyr116 and Glu156. A reductase region spans residues 168–456 (GGWRQTRTFR…FEMFGPFKAS (289 aa)). Positions 171-278 (RQTRTFRVEE…APPYGDFFLR (108 aa)) constitute an FAD-binding FR-type domain. Residues Tyr210 and 227-230 (RQYS) contribute to the FAD site. An NADP(+)-binding site is contributed by 320 to 325 (GIGQTP). 449-452 (MFGP) lines the FAD pocket.

Belongs to the globin family. Two-domain flavohemoproteins subfamily. The protein in the C-terminal section; belongs to the flavoprotein pyridine nucleotide cytochrome reductase family. As to quaternary structure, monomer. Requires heme b as cofactor. FAD serves as cofactor.

It carries out the reaction 2 nitric oxide + NADPH + 2 O2 = 2 nitrate + NADP(+) + H(+). It catalyses the reaction 2 nitric oxide + NADH + 2 O2 = 2 nitrate + NAD(+) + H(+). Flavohemoprotein involved in nitric oxide (NO) detoxification in an aerobic process, termed nitric oxide dioxygenase (NOD) reaction that utilizes O(2) and NAD(P)H to convert NO to nitrate, which protects the protozoan parasite from various noxious nitrogen compounds. Therefore, plays a central role in the inducible response to nitrosative stress. May also be involved in O(2) detoxification. The protein is Flavohemoprotein-1 (hmpA-1) of Giardia intestinalis (strain P15) (Giardia lamblia).